The sequence spans 564 residues: Myb-like protein F (564 aa).

3 disordered regions span residues Tyr22–Asn107, Asn122–Gly203, and Asn310–Tyr410. The segment covering Asn23–Asp79 has biased composition (low complexity). The segment covering Asn82–Asn96 has biased composition (basic and acidic residues). 4 stretches are compositionally biased toward low complexity: residues Gly97–Asn107, Glu135–Lys173, Asn193–Gly203, and Asn310–Asn364. Over residues Lys365 to Lys409 the composition is skewed to basic and acidic residues. The region spanning Pro412 to Leu464 is the SANT domain. Residues Asn519–Asn556 are compositionally biased toward low complexity. Positions Asn519–Asp564 are disordered.

The protein resides in the nucleus. This is Myb-like protein F (mybF) from Dictyostelium discoideum (Social amoeba).